A 114-amino-acid polypeptide reads, in one-letter code: Class I hydrophobin 6 (114 aa).

Residues 1–19 form the signal peptide; the sequence is MLFKQLILVATALTTLAVA. 4 disulfides stabilise this stretch: C33–C93, C40–C87, C41–C74, and C94–C107. N42 carries an N-linked (GlcNAc...) asparagine glycan.

The protein belongs to the fungal hydrophobin family. Self-assembles to form functional amyloid fibrils called rodlets. Self-assembly into fibrillar rodlets occurs spontaneously at hydrophobic:hydrophilic interfaces and the rodlets further associate laterally to form amphipathic monolayers.

It is found in the secreted. Its subcellular location is the cell wall. In terms of biological role, aerial growth, conidiation, and dispersal of filamentous fungi in the environment rely upon a capability of their secreting small amphipathic proteins called hydrophobins (HPBs) with low sequence identity. Class I can self-assemble into an outermost layer of rodlet bundles on aerial cell surfaces, conferring cellular hydrophobicity that supports fungal growth, development and dispersal; whereas Class II form highly ordered films at water-air interfaces through intermolecular interactions but contribute nothing to the rodlet structure. The chain is Class I hydrophobin 6 from Pleurotus ostreatus (strain PC15) (Oyster mushroom).